A 1323-amino-acid polypeptide reads, in one-letter code: uncharacterized protein (1323 aa).

Residues 1–11 show a composition bias toward basic and acidic residues; the sequence is MRELQGDDSSR. 2 disordered regions span residues 1-57 and 79-112; these read MREL…SSYY and IHES…HSET. A compositionally biased stretch (low complexity) spans 12 to 21; sequence KSPPSDSVVK. Position 24 is a phosphoserine (Ser-24). Residues 27 to 40 show a composition bias toward basic and acidic residues; the sequence is DYEHSLKSLQDERT. Composition is skewed to polar residues over residues 42–57 and 80–105; these read NYPN…SSYY and HESS…SSTI. WD repeat units lie at residues 271–314, 320–360, 364–403, 409–449, 453–494, and 502–551; these read RHST…DRAI, GHTR…FPVN, DWHN…APLH, ENIT…EEPE, TTDS…KEGP, and GHTD…LNSM. An RWD domain is found at 671-779; it reads EELSWIGQKY…SYLSGNLSVD (109 aa). The span at 879–888 shows a compositional bias: polar residues; sequence SNSVADSDST. The tract at residues 879–904 is disordered; that stretch reads SNSVADSDSTNYDDENSLNRGGTSES. The RING-type; degenerate zinc finger occupies 1265–1309; it reads CTFCCLSIHGLCIVCGLCLHVMHEDCYKEWFSNGDSISQSCSSGC.

Belongs to the WD repeat WDR59 family.

In terms of biological role, may be involved in telomere capping. This is an uncharacterized protein from Schizosaccharomyces pombe (strain 972 / ATCC 24843) (Fission yeast).